Reading from the N-terminus, the 424-residue chain is CUGBP Elav-like family member 4 (424 aa).

Positions 8 to 27 are disordered; it reads VANGQPDNSSLSSNPTGHMN. Polar residues predominate over residues 9 to 24; that stretch reads ANGQPDNSSLSSNPTG. 2 consecutive RRM domains span residues 47-128 and 342-417; these read IKLF…PADS and PQPP…LKRP.

The protein belongs to the CELF/BRUNOL family.

The protein resides in the nucleus. The protein localises to the cytoplasm. In terms of biological role, RNA-binding protein that may be implicated in the regulation of pre-mRNA alternative splicing. In Xenopus tropicalis (Western clawed frog), this protein is CUGBP Elav-like family member 4 (celf4).